Reading from the N-terminus, the 123-residue chain is Small ribosomal subunit protein uS13 (123 aa).

Residues 95 to 123 form a disordered region; sequence GLPVRGQSSKTNARTRKGPRRSVMSRKKK. Positions 107–123 are enriched in basic residues; the sequence is ARTRKGPRRSVMSRKKK.

The protein belongs to the universal ribosomal protein uS13 family. Part of the 30S ribosomal subunit. Forms a loose heterodimer with protein S19. Forms two bridges to the 50S subunit in the 70S ribosome.

Located at the top of the head of the 30S subunit, it contacts several helices of the 16S rRNA. In the 70S ribosome it contacts the 23S rRNA (bridge B1a) and protein L5 of the 50S subunit (bridge B1b), connecting the 2 subunits; these bridges are implicated in subunit movement. Contacts the tRNAs in the A and P-sites. The protein is Small ribosomal subunit protein uS13 of Maridesulfovibrio salexigens (strain ATCC 14822 / DSM 2638 / NCIMB 8403 / VKM B-1763) (Desulfovibrio salexigens).